The primary structure comprises 163 residues: Lipoprotein signal peptidase (163 aa).

3 helical membrane-spanning segments follow: residues 11 to 31 (ILIAVFVVIFDQVTKYIIATT), 64 to 84 (MTFFFIITIIILIALVYFFIN), and 88 to 108 (YNLFMQVAISLLFAGALGNFI). Residues aspartate 118 and aspartate 136 contribute to the active site. A helical transmembrane segment spans residues 131-151 (IFNIADSSLTIGVILIIIALL).

The protein belongs to the peptidase A8 family.

It localises to the cell membrane. The catalysed reaction is Release of signal peptides from bacterial membrane prolipoproteins. Hydrolyzes -Xaa-Yaa-Zaa-|-(S,diacylglyceryl)Cys-, in which Xaa is hydrophobic (preferably Leu), and Yaa (Ala or Ser) and Zaa (Gly or Ala) have small, neutral side chains.. It participates in protein modification; lipoprotein biosynthesis (signal peptide cleavage). In terms of biological role, this protein specifically catalyzes the removal of signal peptides from prolipoproteins. This Staphylococcus aureus (strain bovine RF122 / ET3-1) protein is Lipoprotein signal peptidase.